A 457-amino-acid polypeptide reads, in one-letter code: Argininosuccinate lyase (457 aa).

It belongs to the lyase 1 family. Argininosuccinate lyase subfamily.

The protein localises to the cytoplasm. The enzyme catalyses 2-(N(omega)-L-arginino)succinate = fumarate + L-arginine. It functions in the pathway amino-acid biosynthesis; L-arginine biosynthesis; L-arginine from L-ornithine and carbamoyl phosphate: step 3/3. This chain is Argininosuccinate lyase, found in Salmonella arizonae (strain ATCC BAA-731 / CDC346-86 / RSK2980).